Here is a 151-residue protein sequence, read N- to C-terminus: Ribosome maturation factor RimP (151 aa).

Belongs to the RimP family.

The protein resides in the cytoplasm. Its function is as follows. Required for maturation of 30S ribosomal subunits. The polypeptide is Ribosome maturation factor RimP (Vibrio campbellii (strain ATCC BAA-1116)).